We begin with the raw amino-acid sequence, 422 residues long: UPF0761 membrane protein Paes_1471 (422 aa).

6 helical membrane-spanning segments follow: residues 47–67 (LLSIVPLMAVILSVLSVSPVF), 103–123 (SVPTIGGLSLFIIALFLISTI), 143–163 (FTLYWTVLTLGPIFIGSSLVA), 185–205 (LLLLPVMNTFLAFFLLYILVP), 208–228 (KVKFVHAFSGAILATLLFEFS), and 247–267 (GALSVIPLLFFWIYLIWVVAL).

This sequence belongs to the UPF0761 family.

It is found in the cell inner membrane. This is UPF0761 membrane protein Paes_1471 from Prosthecochloris aestuarii (strain DSM 271 / SK 413).